Reading from the N-terminus, the 60-residue chain is uncharacterized protein (60 aa).

This is an uncharacterized protein from Autographa californica nuclear polyhedrosis virus (AcMNPV).